The sequence spans 2498 residues: PKS-NRPS hybrid synthetase acdB (2498 aa).

The segment at 34-427 (FEQAAHAHFD…GRADSQVKIR (394 aa)) is adenylation (A) domain. The Carrier 1 domain maps to 531 to 606 (QPATELERDI…SLAGYLMDMD (76 aa)). The residue at position 566 (Ser-566) is an O-(pantetheine 4'-phosphoryl)serine. One can recognise a Ketosynthase family 3 (KS3) domain in the interval 627-1058 (SDDIAVVSMA…GTNAHVIVEE (432 aa)). Active-site for beta-ketoacyl synthase activity residues include Cys-802, His-938, and His-979. A malonyl-CoA:ACP transacylase (MAT) domain region spans residues 1165 to 1485 (LFAGQGSQQL…EILARLHVQH (321 aa)). A ketoreductase (KR) domain region spans residues 1739–1917 (GAVLITGGLS…PAVCVAYGPL (179 aa)). The region spanning 2017-2092 (EILLRTIQEA…ELSRYLLPQL (76 aa)) is the Carrier 2 domain. An O-(pantetheine 4'-phosphoryl)serine modification is found at Ser-2052. Residues 2149–2378 (VTGATEFVGA…FPVDYVCRTI (230 aa)) form a thioester reductase (TE) domain region.

The protein in the C-terminal section; belongs to the NRP synthetase family. Requires pantetheine 4'-phosphate as cofactor.

The protein operates within secondary metabolite biosynthesis. In terms of biological role, PKS-NRPS hybrid synthetase; part of the gene cluster that mediates the biosynthesis of aspcandine, a pyrrolobenzazepine alkaloid. Initially, the indoleamine 2,3-dioxygenase acdA accepts L-tryptophan and performs the oxidative opening of the indole ring to yield N'-formyl-L-kynurenine, which undergoes the spontaneous deformylation reaction to provide L-kynurenine. The kynurenine 3-monooxygenase acdD then hydroxylates L-kynurenine to afford 3-hydroxy-L-kynurenine. 3-hydroxy-L-kynurenine is activated by the A domain of the NRPS-PKS acdB and subsequently loaded onto the enzyme. The KS domain conducts the decarboxylative condensation of the 3-hydroxy-L-kynurenyl and malonyl moieties, and subsequent nucleophilic attacks by the two amino groups would occur nonenzymatically at two distinct positions, achieving the chain release and the construction of the tricyclic system. Finally, a dehydration reaction completes the biosynthesis to yield aspcandine. The polypeptide is PKS-NRPS hybrid synthetase acdB (Aspergillus candidus).